The chain runs to 77 residues: Conotoxin Vc6c (77 aa).

The signal sequence occupies residues Met1 to Ala22. The propeptide occupies Asp23–Arg51. Disulfide bonds link Cys52–Cys67, Cys59–Cys71, and Cys66–Cys76.

As to expression, expressed by the venom duct.

It localises to the secreted. The protein is Conotoxin Vc6c of Conus victoriae (Queen Victoria cone).